A 227-amino-acid polypeptide reads, in one-letter code: MTLSLFDQFSSPSFLGIPMILMALALPWLLIPTPTSRWLSNRVVSLQGWFIARFTNQLFLPLNVGGHKWAPLLASLMMFLLTLNMLGLMPYIFTPTTQLSLNLGLAVPLWLATVLIGMRNQPTHALGHFLPEGTPTALIPILIIMQTISLFIRPLALGVRLTANLTAGHLLIHLISSAVFVLMPMMPVVAILTAVLLLLLTMLEVAVAMIQAYVFILLLSLYLQENV.

The next 6 helical transmembrane spans lie at 14-34 (FLGI…IPTP), 73-93 (LASL…PYIF), 98-118 (QLSL…LIGM), 137-157 (ALIP…PLAL), 179-199 (VFVL…LLLL), and 203-223 (LEVA…SLYL).

The protein belongs to the ATPase A chain family. Component of the ATP synthase complex composed at least of ATP5F1A/subunit alpha, ATP5F1B/subunit beta, ATP5MC1/subunit c (homooctomer), MT-ATP6/subunit a, MT-ATP8/subunit 8, ATP5ME/subunit e, ATP5MF/subunit f, ATP5MG/subunit g, ATP5MK/subunit k, ATP5MJ/subunit j, ATP5F1C/subunit gamma, ATP5F1D/subunit delta, ATP5F1E/subunit epsilon, ATP5PF/subunit F6, ATP5PB/subunit b, ATP5PD/subunit d, ATP5PO/subunit OSCP. ATP synthase complex consists of a soluble F(1) head domain (subunits alpha(3) and beta(3)) - the catalytic core - and a membrane F(0) domain - the membrane proton channel (subunits c, a, 8, e, f, g, k and j). These two domains are linked by a central stalk (subunits gamma, delta, and epsilon) rotating inside the F1 region and a stationary peripheral stalk (subunits F6, b, d, and OSCP). Interacts with DNAJC30; interaction is direct.

It is found in the mitochondrion inner membrane. It carries out the reaction H(+)(in) = H(+)(out). In terms of biological role, subunit a, of the mitochondrial membrane ATP synthase complex (F(1)F(0) ATP synthase or Complex V) that produces ATP from ADP in the presence of a proton gradient across the membrane which is generated by electron transport complexes of the respiratory chain. ATP synthase complex consist of a soluble F(1) head domain - the catalytic core - and a membrane F(1) domain - the membrane proton channel. These two domains are linked by a central stalk rotating inside the F(1) region and a stationary peripheral stalk. During catalysis, ATP synthesis in the catalytic domain of F(1) is coupled via a rotary mechanism of the central stalk subunits to proton translocation. With the subunit c (ATP5MC1), forms the proton-conducting channel in the F(0) domain, that contains two crucial half-channels (inlet and outlet) that facilitate proton movement from the mitochondrial intermembrane space (IMS) into the matrix. Protons are taken up via the inlet half-channel and released through the outlet half-channel, following a Grotthuss mechanism. The sequence is that of ATP synthase F(0) complex subunit a from Gadus morhua (Atlantic cod).